The following is a 318-amino-acid chain: Oncosphere antigen A (318 aa).

3 consecutive Fibronectin type-III domains span residues 6–103 (IPQN…TPLP), 109–207 (KPSF…ISRA), and 211–308 (VPQN…TPSV).

This Hydatigena taeniaeformis (Feline tapeworm) protein is Oncosphere antigen A (ONCA).